The following is a 202-amino-acid chain: Urease accessory protein UreE (202 aa).

The segment at 138–202 is disordered; sequence RGAYHSHGGH…HGHHHGHKHD (65 aa). Basic and acidic residues predominate over residues 147-193; it reads HSHDHGHAAHDHGHAAHDHGHNHDHDHGHAHGHDHQHDHNCDHDHDH.

It belongs to the UreE family.

Its subcellular location is the cytoplasm. In terms of biological role, involved in urease metallocenter assembly. Binds nickel. Probably functions as a nickel donor during metallocenter assembly. This chain is Urease accessory protein UreE, found in Rhizobium etli (strain CIAT 652).